The primary structure comprises 436 residues: 3-ketoacyl-CoA thiolase (436 aa).

The active-site Acyl-thioester intermediate is Cys99. Active-site proton acceptor residues include His392 and Cys422.

It belongs to the thiolase-like superfamily. Thiolase family. Heterotetramer of two alpha chains (FadJ) and two beta chains (FadI).

The protein resides in the cytoplasm. It carries out the reaction an acyl-CoA + acetyl-CoA = a 3-oxoacyl-CoA + CoA. Its pathway is lipid metabolism; fatty acid beta-oxidation. Its function is as follows. Catalyzes the final step of fatty acid oxidation in which acetyl-CoA is released and the CoA ester of a fatty acid two carbons shorter is formed. In Salmonella newport (strain SL254), this protein is 3-ketoacyl-CoA thiolase.